The primary structure comprises 340 residues: Selenide, water dikinase (340 aa).

Residue Cys-13 is part of the active site. ATP contacts are provided by residues Lys-16 and 43–45 (ASD). Asp-46 provides a ligand contact to Mg(2+). ATP-binding positions include Asp-63, Asp-86, and 133–135 (GHS). A Mg(2+)-binding site is contributed by Asp-86. Position 221 (Asp-221) interacts with Mg(2+).

Belongs to the selenophosphate synthase 1 family. Class I subfamily. Homodimer. Mg(2+) serves as cofactor.

It carries out the reaction hydrogenselenide + ATP + H2O = selenophosphate + AMP + phosphate + 2 H(+). Its function is as follows. Synthesizes selenophosphate from selenide and ATP. The protein is Selenide, water dikinase of Desulfitobacterium hafniense (strain Y51).